The primary structure comprises 405 residues: Beta-citrylglutamate synthase B (405 aa).

Positions 115-300 (FQELAGHGVP…VAGIVADFVL (186 aa)) constitute an ATP-grasp domain. ATP-binding positions include K154, 189–199 (QEYVKESHGRD), and R215. Mg(2+)-binding residues include D260, E273, and N275. Mn(2+)-binding residues include D260, E273, and N275. The segment at 359 to 387 (AMSTMSTSSTSSESEADLTETGPTPVGAN) is disordered. Low complexity predominate over residues 360–371 (MSTMSTSSTSSE).

Belongs to the RimK family. Mg(2+) is required as a cofactor. Requires Mn(2+) as cofactor.

It is found in the cytoplasm. It catalyses the reaction citrate + L-glutamate + ATP = beta-citrylglutamate + ADP + phosphate + H(+). The enzyme catalyses N-acetyl-L-aspartate + L-glutamate + ATP = N-acetyl-L-aspartyl-L-glutamate + ADP + phosphate + H(+). Its function is as follows. Catalyzes the synthesis of beta-citryl-L-glutamate and N-acetyl-L-aspartyl-L-glutamate. Beta-citryl-L-glutamate is synthesized more efficiently than N-acetyl-L-aspartyl-L-glutamate. The protein is Beta-citrylglutamate synthase B (rimklb) of Danio rerio (Zebrafish).